Here is a 560-residue protein sequence, read N- to C-terminus: Putative transport protein VP1232 (560 aa).

5 consecutive transmembrane segments (helical) span residues 8 to 28, 37 to 57, 66 to 86, 91 to 111, and 164 to 184; these read LLDQ…LAIG, LGNS…GFSF, FMLF…GIFF, HYFI…YGLS, and VGYA…AKLL. RCK C-terminal domains lie at 205 to 292 and 293 to 376; these read LGNS…FRNG and KEVF…KIGF. The next 6 membrane-spanning stretches (helical) occupy residues 386–406, 409–429, 443–463, 478–498, 506–526, and 539–559; these read LLAF…TMTF, VSFS…LGFL, ALNM…GLSA, VIGL…LVGA, ALLF…DVVN, and AGTY…LIIL.

The protein belongs to the AAE transporter (TC 2.A.81) family. YbjL subfamily.

Its subcellular location is the cell membrane. The protein is Putative transport protein VP1232 of Vibrio parahaemolyticus serotype O3:K6 (strain RIMD 2210633).